Reading from the N-terminus, the 231-residue chain is Ribonuclease HI (231 aa).

Residues Met1 to Val146 form the RNase H type-1 domain. 4 residues coordinate Mg(2+): Asp10, Glu50, Asp72, and Asp138. Composition is skewed to low complexity over residues Gln148 to Ser157 and Val166 to Ala181. 2 disordered regions span residues Gln148–Thr192 and Pro212–Gly231.

The protein belongs to the RNase H family. Monomer. Mg(2+) serves as cofactor.

The protein resides in the cytoplasm. It catalyses the reaction Endonucleolytic cleavage to 5'-phosphomonoester.. Its function is as follows. Endonuclease that specifically degrades the RNA of RNA-DNA hybrids. In Streptomyces coelicolor (strain ATCC BAA-471 / A3(2) / M145), this protein is Ribonuclease HI (rnhA).